The primary structure comprises 422 residues: Large ribosomal subunit protein uL4 (422 aa).

Position 2 is an N-acetylalanine (alanine 2). Position 14 is an N6-acetyllysine (lysine 14). Arginine 97 carries the omega-N-methylarginine modification. Lysine 106 is modified (N6-acetyllysine). Residue lysine 239 forms a Glycyl lysine isopeptide (Lys-Gly) (interchain with G-Cter in SUMO2) linkage. Residue lysine 259 is modified to N6-acetyllysine. Threonine 266 is modified (phosphothreonine). 2 positions are modified to phosphoserine: serine 290 and serine 295. Arginine 300 carries the post-translational modification Citrulline. A Glycyl lysine isopeptide (Lys-Gly) (interchain with G-Cter in SUMO2) cross-link involves residue lysine 327. An N6-acetyllysine mark is found at lysine 333 and lysine 353. Residues 359–422 (EAKSDQKGVQ…PTSEEKKAAA (64 aa)) are disordered. At lysine 361 the chain carries N6-acetyllysine; alternate. A Glycyl lysine isopeptide (Lys-Gly) (interchain with G-Cter in SUMO1); alternate cross-link involves residue lysine 361. The residue at position 362 (serine 362) is a Phosphoserine. Basic and acidic residues-rich tracts occupy residues 376–385 (NKEKKAVGDK) and 402–422 (PAAE…KAAA).

It belongs to the universal ribosomal protein uL4 family. As to quaternary structure, component of the large ribosomal subunit. May bind IPO9 with low affinity. Interacts with RBM3. In terms of processing, citrullinated by PADI4.

It localises to the cytoplasm. Functionally, component of the large ribosomal subunit. The ribosome is a large ribonucleoprotein complex responsible for the synthesis of proteins in the cell. The chain is Large ribosomal subunit protein uL4 (RPL4) from Bos taurus (Bovine).